We begin with the raw amino-acid sequence, 377 residues long: Probable multidrug ABC transporter permease YbhS (377 aa).

Residues 1-28 (MSNPILSWRRVRALCVKETRQIVRDPSS) lie on the Cytoplasmic side of the membrane. The helical transmembrane segment at 29–49 (WLIAVVIPLLLLFIFGYGINL) threads the bilayer. The Periplasmic portion of the chain corresponds to 50–181 (DSSKLRVGIL…WFNPAAISQH (132 aa)). The 231-residue stretch at 145-375 (IWQIWQMQRA…GLTWLKTKRR (231 aa)) folds into the ABC transmembrane type-2 domain. Residues 182–202 (FIIPGAVTIIMTVIGAILTSL) form a helical membrane-spanning segment. Residues 203 to 234 (VVAREWERGTMEALLSTEITRTELLLCKLIPY) lie on the Cytoplasmic side of the membrane. The helical transmembrane segment at 235-255 (YFLGMLAMLLCMLVSVFILGV) threads the bilayer. At 256 to 261 (PYRGSL) the chain is on the periplasmic side. A helical membrane pass occupies residues 262–282 (LILFFISSLFLLSTLGMGLLI). The Cytoplasmic segment spans residues 283–291 (STITRNQFN). The helical transmembrane segment at 292 to 312 (AAQVALNAAFLPSIMLSGFIF) threads the bilayer. Topologically, residues 313-345 (QIDSMPAVIRAVTYIIPARYFVSTLQSLFLAGN) are periplasmic. The chain crosses the membrane as a helical span at residues 346–366 (IPVVLVVNVLFLIASAVMFIG). Residues 367 to 377 (LTWLKTKRRLD) lie on the Cytoplasmic side of the membrane.

Belongs to the ABC-2 integral membrane protein family. In terms of assembly, the complex is probably composed of two ATP-binding proteins (YbhF) and two transmembrane proteins (YbhR and YbhS).

The protein resides in the cell inner membrane. Its function is as follows. Part of the ABC transporter complex YbhFSR that could be involved in efflux of cefoperazone. Probably involved in the translocation of the substrate across the membrane. This chain is Probable multidrug ABC transporter permease YbhS (ybhS), found in Escherichia coli O157:H7.